Consider the following 1522-residue polypeptide: Lysophospholipase NTE1 (1522 aa).

Residues Met-1–Thr-73 lie on the Lumenal side of the membrane. Residues Val-74–Leu-94 form a helical membrane-spanning segment. At Arg-95–Ile-1522 the chain is on the cytoplasmic side. Disordered stretches follow at residues Ser-443–Lys-468, Asp-485–Pro-523, and Ser-535–Val-556. 2 stretches are compositionally biased toward low complexity: residues Lys-498 to Ser-511 and Pro-540 to Val-555. A nucleoside 3',5'-cyclic phosphate contacts are provided by residues Pro-661–Leu-782 and Thr-778–Lys-918. Disordered regions lie at residues Gln-828–Pro-852 and Ser-1125–Pro-1145. One can recognise a PNPLA domain in the interval Leu-1219–Lys-1383. Residues Gly-1223–Gly-1228 carry the GXGXXG motif. A GXSXG motif is present at residues Gly-1250–Gly-1254. Ser-1252 functions as the Nucleophile in the catalytic mechanism. The Proton acceptor role is filled by Asp-1370. Residues Asp-1370–Gly-1372 carry the DGA/G motif.

The protein belongs to the NTE family.

The protein localises to the endoplasmic reticulum membrane. It catalyses the reaction a 1-acyl-sn-glycero-3-phosphocholine + H2O = sn-glycerol 3-phosphocholine + a fatty acid + H(+). Inhibited by organophosphorus esters. Functionally, intracellular phospholipase B that catalyzes the double deacylation of phosphatidylcholine (PC) to glycerophosphocholine (GroPCho). Plays an important role in membrane lipid homeostasis. Responsible for the rapid PC turnover in response to inositol, elevated temperatures, or when choline is present in the growth medium. The sequence is that of Lysophospholipase NTE1 (NTE1) from Eremothecium gossypii (strain ATCC 10895 / CBS 109.51 / FGSC 9923 / NRRL Y-1056) (Yeast).